The primary structure comprises 104 residues: Phosphoribosyl-ATP pyrophosphatase (104 aa).

Belongs to the PRA-PH family.

The protein resides in the cytoplasm. It carries out the reaction 1-(5-phospho-beta-D-ribosyl)-ATP + H2O = 1-(5-phospho-beta-D-ribosyl)-5'-AMP + diphosphate + H(+). It functions in the pathway amino-acid biosynthesis; L-histidine biosynthesis; L-histidine from 5-phospho-alpha-D-ribose 1-diphosphate: step 2/9. The chain is Phosphoribosyl-ATP pyrophosphatase from Erythrobacter litoralis (strain HTCC2594).